A 58-amino-acid polypeptide reads, in one-letter code: Small ribosomal subunit protein bS21 (58 aa).

The segment at 39 to 58 (DKPSVKKRAKSKAAAKYRSR) is disordered. The segment covering 43–58 (VKKRAKSKAAAKYRSR) has biased composition (basic residues).

Belongs to the bacterial ribosomal protein bS21 family.

In Chlamydia pneumoniae (Chlamydophila pneumoniae), this protein is Small ribosomal subunit protein bS21 (rpsU).